The sequence spans 202 residues: Small ribosomal subunit protein uS4c (202 aa).

One can recognise an S4 RNA-binding domain in the interval Met90–Asn154.

Belongs to the universal ribosomal protein uS4 family. Part of the 30S ribosomal subunit. Contacts protein S5. The interaction surface between S4 and S5 is involved in control of translational fidelity.

It localises to the plastid. It is found in the chloroplast. Its function is as follows. One of the primary rRNA binding proteins, it binds directly to 16S rRNA where it nucleates assembly of the body of the 30S subunit. Functionally, with S5 and S12 plays an important role in translational accuracy. This chain is Small ribosomal subunit protein uS4c (rps4), found in Ricciocarpos natans (Liverwort).